Here is a 536-residue protein sequence, read N- to C-terminus: Multicopper oxidase terE (536 aa).

The segment at 1–21 (MHWHGLSQSTAPFSDGSPQAS) is disordered. Plastocyanin-like domains follow at residues 1–67 (MHWH…VEEK), 79–238 (ERIL…LSYN), and 354–488 (TVQK…VWMM). Residues H2, H4, H48, and H50 each coordinate Cu cation. Cu cation is bound at residue H397.

The protein belongs to the multicopper oxidase family.

It participates in secondary metabolite biosynthesis. Functionally, multicopper oxidase; part of the gene cluster that mediates the biosynthesis of terrein, a fungal metabolite with ecological, antimicrobial, antiproliferative, and antioxidative activities. The first step in the pathway is performed by the polyketide synthase terA that produces 4-hydroxy-6-methylpyranon (4-HMP), orsellinic acid (OA), and 2,3-dehydro-6-hydroxymellein (2,3-dehydro-6-HM) by condensing acetyl-CoA with two, three, or four malonyl-CoA units, respectively. 4-HMP and OA are not pathway intermediates, but are rather shunt or side products. 2,3-dehydro-6-HM is further converted to 6-hydroxymellein (6-HM) by the 6-hydroxymellein synthase terB. The monooxygenases terC and terD, the multicopper oxidase terE and the Kelch-like protein terF are then involved in the transformation of 6-HM to terrein. Even if they are co-regulated with the other terrein cluster genes, terH and terI seem to be dispensable for terrein production; whereas one or both of the 2 transporters terG and terJ are probably required for efficient secretion of metabolites. The polypeptide is Multicopper oxidase terE (Aspergillus terreus (strain NIH 2624 / FGSC A1156)).